The chain runs to 139 residues: MIIGIGTDLANIERIERTLERFGDRFRHRVFTEREQRKADSRQQTAATYAKRWAAKEACSKALGTGLRMGISWRDMAVQNLETGQPTMYVTGWAAERLKQLTPEGHEAVIHVSLTDDHPWAQAYVVISAIPLEAAARSA.

Positions 8 and 57 each coordinate Mg(2+).

The protein belongs to the P-Pant transferase superfamily. AcpS family. Mg(2+) serves as cofactor.

It localises to the cytoplasm. The catalysed reaction is apo-[ACP] + CoA = holo-[ACP] + adenosine 3',5'-bisphosphate + H(+). Its function is as follows. Transfers the 4'-phosphopantetheine moiety from coenzyme A to a Ser of acyl-carrier-protein. The chain is Holo-[acyl-carrier-protein] synthase from Dinoroseobacter shibae (strain DSM 16493 / NCIMB 14021 / DFL 12).